The sequence spans 460 residues: tRNA modification GTPase MnmE (460 aa).

(6S)-5-formyl-5,6,7,8-tetrahydrofolate-binding residues include Arg22, Glu87, and Arg126. The TrmE-type G domain maps to 222–381 (GLKTAIIGKP…LENTIYNLVF (160 aa)). Asn232 contacts K(+). GTP contacts are provided by residues 232–237 (NVGKSS), 251–257 (TDIPGTT), and 276–279 (DTAG). Residue Ser236 participates in Mg(2+) binding. K(+) contacts are provided by Thr251, Ile253, and Thr256. Thr257 is a binding site for Mg(2+). Residue Lys460 participates in (6S)-5-formyl-5,6,7,8-tetrahydrofolate binding.

Belongs to the TRAFAC class TrmE-Era-EngA-EngB-Septin-like GTPase superfamily. TrmE GTPase family. As to quaternary structure, homodimer. Heterotetramer of two MnmE and two MnmG subunits. The cofactor is K(+).

Its subcellular location is the cytoplasm. Functionally, exhibits a very high intrinsic GTPase hydrolysis rate. Involved in the addition of a carboxymethylaminomethyl (cmnm) group at the wobble position (U34) of certain tRNAs, forming tRNA-cmnm(5)s(2)U34. In Thermoanaerobacter sp. (strain X514), this protein is tRNA modification GTPase MnmE.